Consider the following 225-residue polypeptide: Uracil-DNA glycosylase (225 aa).

The Proton acceptor role is filled by Asp-65.

This sequence belongs to the uracil-DNA glycosylase (UDG) superfamily. UNG family.

Its subcellular location is the cytoplasm. It catalyses the reaction Hydrolyzes single-stranded DNA or mismatched double-stranded DNA and polynucleotides, releasing free uracil.. Excises uracil residues from the DNA which can arise as a result of misincorporation of dUMP residues by DNA polymerase or due to deamination of cytosine. This chain is Uracil-DNA glycosylase, found in Bacillus anthracis (strain A0248).